Here is a 201-residue protein sequence, read N- to C-terminus: MDKFTTLEGVAAPLKIINVDTDMIIPKQYLKTIKRTGLGKGLFSEQRYRDDGSENPDFILNKPAYRNAKVLVAGDNFGCGSSREHAPWALLDFGIRCVISTSFGDIFYNNCFKNGILPIRVTQADLDKLFDDAERGANATLTIDLANQEIRGPDGGKATFEIDPFRKHCLLNGLDDIGLTMEKKSAIDSYEDKARRERAWA.

Belongs to the LeuD family. LeuD type 1 subfamily. Heterodimer of LeuC and LeuD.

It carries out the reaction (2R,3S)-3-isopropylmalate = (2S)-2-isopropylmalate. The protein operates within amino-acid biosynthesis; L-leucine biosynthesis; L-leucine from 3-methyl-2-oxobutanoate: step 2/4. Its function is as follows. Catalyzes the isomerization between 2-isopropylmalate and 3-isopropylmalate, via the formation of 2-isopropylmaleate. The sequence is that of 3-isopropylmalate dehydratase small subunit from Nitrobacter hamburgensis (strain DSM 10229 / NCIMB 13809 / X14).